A 277-amino-acid chain; its full sequence is Bis(5'-nucleosyl)-tetraphosphatase, symmetrical (277 aa).

Belongs to the Ap4A hydrolase family.

It carries out the reaction P(1),P(4)-bis(5'-adenosyl) tetraphosphate + H2O = 2 ADP + 2 H(+). Its function is as follows. Hydrolyzes diadenosine 5',5'''-P1,P4-tetraphosphate to yield ADP. In Azotobacter vinelandii (strain DJ / ATCC BAA-1303), this protein is Bis(5'-nucleosyl)-tetraphosphatase, symmetrical.